Consider the following 548-residue polypeptide: uncharacterized protein (548 aa).

Residues 8–200 (KLFADMIIQG…LLCVYEGFLK (193 aa)) enclose the DhaL domain.

This is an uncharacterized protein from Staphylococcus aureus (strain bovine RF122 / ET3-1).